The chain runs to 138 residues: Putative pre-16S rRNA nuclease (138 aa).

It belongs to the YqgF nuclease family.

It localises to the cytoplasm. Could be a nuclease involved in processing of the 5'-end of pre-16S rRNA. This is Putative pre-16S rRNA nuclease from Geobacillus thermodenitrificans (strain NG80-2).